Consider the following 667-residue polypeptide: Smc-like protein Sph2 (667 aa).

Coiled coils occupy residues 153–295 (GSIQ…SLAT) and 355–517 (GRLD…AITA).

Belongs to the Sph1/Sph2 family.

The protein localises to the cytoplasm. May play a role in replication. The chain is Smc-like protein Sph2 (sph2) from Halobacterium salinarum (strain ATCC 29341 / DSM 671 / R1).